Reading from the N-terminus, the 239-residue chain is Tetrahydromethanopterin S-methyltransferase subunit A (239 aa).

Residues 1–215 lie on the Cytoplasmic side of the membrane; that stretch reads MANKKSPAAT…EAAMIAKFNS (215 aa). His85 is a 5-hydroxybenzimidazolylcob(I)amide binding site. Residues 216–238 traverse the membrane as a helical segment; that stretch reads GYYNGKIQGIAIGLFLSILVFSL. Leu239 is a topological domain (extracellular).

This sequence belongs to the MtrA family. The complex is composed of 8 subunits; MtrA, MtrB, MtrC, MtrD, MtrE, MtrF, MtrG and MtrH. The cofactor is 5-hydroxybenzimidazolylcob(I)amide.

The protein resides in the cell membrane. It catalyses the reaction 5-methyl-5,6,7,8-tetrahydromethanopterin + coenzyme M + 2 Na(+)(in) = 5,6,7,8-tetrahydromethanopterin + methyl-coenzyme M + 2 Na(+)(out). The protein operates within one-carbon metabolism; methanogenesis from CO(2); methyl-coenzyme M from 5,10-methylene-5,6,7,8-tetrahydromethanopterin: step 2/2. In terms of biological role, part of a complex that catalyzes the formation of methyl-coenzyme M and tetrahydromethanopterin from coenzyme M and methyl-tetrahydromethanopterin. This is an energy-conserving, sodium-ion translocating step. This Methanococcus maripaludis (strain C7 / ATCC BAA-1331) protein is Tetrahydromethanopterin S-methyltransferase subunit A.